We begin with the raw amino-acid sequence, 1026 residues long: Multidrug resistance protein MdtC (1026 aa).

Residues methionine 1–leucine 6 are Cytoplasmic-facing. The chain crosses the membrane as a helical span at residues phenylalanine 7–phenylalanine 29. The Periplasmic segment spans residues arginine 30 to glutamate 335. A helical membrane pass occupies residues glutamate 336–leucine 353. The Cytoplasmic segment spans residues arginine 354 to threonine 359. The chain crosses the membrane as a helical span at residues leucine 360–leucine 379. The Periplasmic portion of the chain corresponds to cysteine 380–serine 388. A helical transmembrane segment spans residues leucine 389–alanine 411. The Cytoplasmic segment spans residues arginine 412–glutamate 430. Residues valine 431–glycine 453 form a helical membrane-spanning segment. Topologically, residues glycine 454 to leucine 467 are periplasmic. A helical transmembrane segment spans residues serine 468–leucine 490. Over lysine 491–glutamine 852 the chain is Cytoplasmic. The chain crosses the membrane as a helical span at residues leucine 853 to valine 875. Residues histidine 876–alanine 894 are Periplasmic-facing. A helical transmembrane segment spans residues leucine 895–valine 917. At lysine 918–cysteine 947 the chain is on the cytoplasmic side. A helical membrane pass occupies residues leucine 948–leucine 970. Over serine 971–isoleucine 984 the chain is Periplasmic. A helical membrane pass occupies residues threonine 985–phenylalanine 1007. Over phenylalanine 1008 to isoleucine 1026 the chain is Cytoplasmic.

This sequence belongs to the resistance-nodulation-cell division (RND) (TC 2.A.6) family. MdtC subfamily. In terms of assembly, part of a tripartite efflux system composed of MdtA, MdtB and MdtC. MdtC forms a heteromultimer with MdtB.

It is found in the cell inner membrane. The protein is Multidrug resistance protein MdtC of Salmonella typhi.